Reading from the N-terminus, the 529-residue chain is Delayed-rectifier potassium channel regulatory subunit KCNS1 (529 aa).

Residues 1 to 217 (MLMLLVRGTH…LTMENPGYSL (217 aa)) are Cytoplasmic-facing. Residues 218 to 239 (PSKLFSCVSIGVVLASIAAMCI) form a helical membrane-spanning segment. The Extracellular portion of the chain corresponds to 240 to 270 (HSLPEYQAREAAAAVATVAAGRSAEDVRDDP). The chain crosses the membrane as a helical span at residues 271–293 (VLRRLEYFCIAWFSFEVSSRLLL). The Cytoplasmic segment spans residues 294 to 304 (APSTRNFFCHP). The helical transmembrane segment at 305-322 (LNLIDIVSVLPFYLTLLA) threads the bilayer. Residues 323–342 (SVALGGNNHGGTSGEELGHL) are Extracellular-facing. The chain crosses the membrane as a helical; Voltage-sensor span at residues 343 to 363 (GKVVQVFRLMRIFRVLKLARH). Residues 364-378 (STGLRSLGATLKHSY) lie on the Cytoplasmic side of the membrane. Residues 379 to 400 (REVGILLLYLAVGVSVFSGVAY) traverse the membrane as a helical segment. At 401-413 (TAEKEEDVGFDTI) the chain is on the extracellular side. The segment at residues 414–425 (PACWWWGTVSMT) is an intramembrane region (helical). Residues 426–431 (TVGYGD) carry the Selectivity filter motif. The stretch at 426–433 (TVGYGDVV) is an intramembrane region. The Extracellular segment spans residues 434 to 440 (PVTLAGK). A helical membrane pass occupies residues 441–469 (LAASGCILGGILVVALPITIIFNKFSHFY). Residues 470–529 (QRQKALEAAVRNSGHREFEDLLSSVDGVSDASLETSRETSQEGRSADLEAPSESPKPQIY) are Cytoplasmic-facing. The interval 498-529 (SDASLETSRETSQEGRSADLEAPSESPKPQIY) is disordered. Over residues 504–516 (TSRETSQEGRSAD) the composition is skewed to basic and acidic residues.

It belongs to the potassium channel family. S (TC 1.A.1.2) subfamily. Kv9.1/KCNS1 sub-subfamily. In terms of assembly, heterotetramer with KCNB1. Heterotetramer with KCNB2. Does not form homomultimers.

It localises to the cell membrane. Functionally, potassium channel regulatory subunit that modulate the delayed rectifier voltage-gated potassium channel activity of KCNB1 and KCNB2 by altering their kinetics, expression levels, and shifting the half-inactivation potential to more polarized values. While it does not form functional channels on its own, it can form functional heterotetrameric channels with KCNB1 and KCNB2. Each regulatory subunit has unique regulatory properties that can lead to extensive inhibition, significant changes in kinetics, and/or substantial shifts in the voltage dependencies of the inactivation process. In Lemur catta (Ring-tailed lemur), this protein is Delayed-rectifier potassium channel regulatory subunit KCNS1.